The chain runs to 1030 residues: Teashirt homolog 2 (1030 aa).

The disordered stretch occupies residues 1–120 (MPRRKQQAPK…THPKLPSEPH (120 aa)). Residues 11-42 (RAAGYAQEEVLKEEEEIKEEEEEEEDSGSVAQ) adopt a coiled-coil conformation. Acidic residues predominate over residues 21–37 (LKEEEEIKEEEEEEEDS). Composition is skewed to polar residues over residues 39–49 (SVAQHQSSNDT) and 66–95 (SCQNSPGSHLSNQDAENESLLSDASDQVSD). The span at 103-120 (DVSDKKANTHPKLPSEPH) shows a compositional bias: basic and acidic residues. K189 participates in a covalent cross-link: Glycyl lysine isopeptide (Lys-Gly) (interchain with G-Cter in SUMO2). C2H2-type zinc fingers lie at residues 216–240 (FRCRQCSAAYDTLVELTVHMNETGH) and 276–300 (LKCMFCGDSFDSLQDLSVHMIKTKH). Residues 240–266 (HYQDDNRKKDKLRPTSYSKPRKRAFQD) are disordered. Glycyl lysine isopeptide (Lys-Gly) (interchain with G-Cter in SUMO2) cross-links involve residues K307 and K316. Residues 328–348 (VNRPCSPDSTTGSLADSFSSQ) are disordered. Over residues 334-348 (PDSTTGSLADSFSSQ) the composition is skewed to polar residues. A C2H2-type 3; atypical zinc finger spans residues 381 to 405 (LKCMECGSSHDTLQQLTTHMMVTGH). A Glycyl lysine isopeptide (Lys-Gly) (interchain with G-Cter in SUMO2) cross-link involves residue K418. The segment covering 432-459 (SLSETPNSESLAPKPSSNSPSECTASTT) has biased composition (polar residues). Residues 432–488 (SLSETPNSESLAPKPSSNSPSECTASTTELKKESKKEKGEGIEDEQGVKSEDYEDSL) are disordered. A compositionally biased stretch (basic and acidic residues) spans 460 to 482 (ELKKESKKEKGEGIEDEQGVKSE). Residues K462, K480, K497, and K601 each participate in a glycyl lysine isopeptide (Lys-Gly) (interchain with G-Cter in SUMO2) cross-link. Composition is skewed to basic and acidic residues over residues 608–623 (DEVVKQCGKESPHEEA) and 633–664 (SFSKIEPPSESRKAEPCPLKEEEKPQKEKPEP). Disordered stretches follow at residues 608–687 (DEVV…LPSI), 703–726 (KATEPLRSPSCSSPNSSTSPVFHK), and 759–784 (QPIDLTKSKSKRAESSQAQSCTSPPQ). Residue K652 forms a Glycyl lysine isopeptide (Lys-Gly) (interchain with G-Cter in SUMO2) linkage. The span at 710–722 (SPSCSSPNSSTSP) shows a compositional bias: low complexity. Residues 773 to 783 (SSQAQSCTSPP) are compositionally biased toward polar residues. Residues K796 and K816 each participate in a glycyl lysine isopeptide (Lys-Gly) (interchain with G-Cter in SUMO2) cross-link. A DNA-binding region (homeobox) is located at residues 837 to 907 (RKGRQSNWNP…NVKYQLRKTG (71 aa)). A C2H2-type 4 zinc finger spans residues 922 to 944 (FYCSDCASQFRTPSTYISHLESH). K962 participates in a covalent cross-link: Glycyl lysine isopeptide (Lys-Gly) (interchain with G-Cter in SUMO2). Disordered stretches follow at residues 965 to 987 (QEISRVSSAQRSPETIAGEEDTD) and 1009 to 1030 (LSKTHSKSPEHHSQFVADVDEE). Polar residues predominate over residues 968–977 (SRVSSAQRSP). A Phosphoserine modification is found at S976. The C2H2-type 5 zinc finger occupies 990–1013 (FKCKLCRRTFVSKHAVKLHLSKTH).

The protein belongs to the teashirt C2H2-type zinc-finger protein family. In terms of assembly, interacts (via homeobox domain) with APBB1 (via PID domain 1). In terms of processing, sumoylated.

It localises to the nucleus. Its function is as follows. Probable transcriptional regulator involved in developmental processes. May act as a transcriptional repressor (Potential). The polypeptide is Teashirt homolog 2 (Tshz2) (Mus musculus (Mouse)).